We begin with the raw amino-acid sequence, 406 residues long: Coenzyme A biosynthesis bifunctional protein CoaBC (406 aa).

Residues 1–191 (MLNNRNVLLC…ETSAPLEGKH (191 aa)) form a phosphopantothenoylcysteine decarboxylase region. Cysteine 157 functions as the Proton donor in the catalytic mechanism. The tract at residues 192 to 406 (VVITAGPTRE…ALSKQTGERS (215 aa)) is phosphopantothenate--cysteine ligase. CTP-binding residues include aspartate 281, lysine 291, phenylalanine 325, lysine 339, and lysine 343.

This sequence in the N-terminal section; belongs to the HFCD (homo-oligomeric flavin containing Cys decarboxylase) superfamily. In the C-terminal section; belongs to the PPC synthetase family. Requires Mg(2+) as cofactor. FMN is required as a cofactor.

It carries out the reaction N-[(R)-4-phosphopantothenoyl]-L-cysteine + H(+) = (R)-4'-phosphopantetheine + CO2. The enzyme catalyses (R)-4'-phosphopantothenate + L-cysteine + CTP = N-[(R)-4-phosphopantothenoyl]-L-cysteine + CMP + diphosphate + H(+). The protein operates within cofactor biosynthesis; coenzyme A biosynthesis; CoA from (R)-pantothenate: step 2/5. It participates in cofactor biosynthesis; coenzyme A biosynthesis; CoA from (R)-pantothenate: step 3/5. Functionally, catalyzes two sequential steps in the biosynthesis of coenzyme A. In the first step cysteine is conjugated to 4'-phosphopantothenate to form 4-phosphopantothenoylcysteine. In the second step the latter compound is decarboxylated to form 4'-phosphopantotheine. The protein is Coenzyme A biosynthesis bifunctional protein CoaBC of Bacillus subtilis (strain 168).